The following is a 132-amino-acid chain: MVEKNTYFIGVGRRKTAVATVKLMSGNGVIVIDGKPIEERFTRIQERNVILNPMMVTDTMGKFNAVIKVLGGGVTGQSGAIAHGIARALEKTDEKLRATLKSNGLLTRDDRTKERKKPGLKRARKAPQYTKR.

The disordered stretch occupies residues 100–132 (LKSNGLLTRDDRTKERKKPGLKRARKAPQYTKR). Over residues 114-132 (ERKKPGLKRARKAPQYTKR) the composition is skewed to basic residues.

Belongs to the universal ribosomal protein uS9 family.

This Dehalococcoides mccartyi (strain ATCC BAA-2100 / JCM 16839 / KCTC 5957 / BAV1) protein is Small ribosomal subunit protein uS9.